Reading from the N-terminus, the 428-residue chain is Lupus La protein homolog A (428 aa).

An HTH La-type RNA-binding domain is found at 7-99 (KEQKLDSDTK…RRSPAKPLPE (93 aa)). The RRM domain occupies 111–203 (KSVYIKGFPT…EERKLNKSEE (93 aa)). 2 disordered regions span residues 187–223 (EYHAKKNEERKLNKSEEKAKSKQVKKEAQKQAEDAER) and 323–428 (QESF…VGDQ). 2 consecutive short sequence motifs (nuclear localization signal) follow at residues 196–212 (RKLNKSEEKAKSKQVKK) and 316–332 (KKILEGKQESFNKRKGR). In terms of domain architecture, xRRM spans 227–349 (EERVGSLLKF…KGRGGKGNDS (123 aa)). Composition is skewed to basic residues over residues 328–343 (KRKGRDGRKFKGKGRG) and 352–361 (RKRTQFQGKK). Residues 366-377 (SSDDEDDMEESE) are compositionally biased toward acidic residues. Residues 406–428 (RSLDDKAEDGPAVKQSKTEVGDQ) are compositionally biased toward basic and acidic residues.

Phosphorylated.

The protein resides in the nucleus. Functionally, la protein plays a role in the transcription of RNA polymerase III. It is most probably a transcription termination factor. Binds to the 3' termini of virtually all nascent polymerase III transcripts. The sequence is that of Lupus La protein homolog A (ssb-a) from Xenopus laevis (African clawed frog).